Consider the following 94-residue polypeptide: ESAT-6-like protein EsxI (94 aa).

This sequence belongs to the WXG100 family. ESAT-6 subfamily.

Its subcellular location is the secreted. This is ESAT-6-like protein EsxI from Mycobacterium tuberculosis (strain ATCC 25618 / H37Rv).